Reading from the N-terminus, the 407-residue chain is Na(+)-translocating NADH-quinone reductase subunit F (407 aa).

Residues 3–23 (IILGVVMFTLIVLVLSGLILA) form a helical membrane-spanning segment. The 2Fe-2S ferredoxin-type domain maps to 32–126 (GDVVIEINNE…NMKIELPEEI (95 aa)). Residues Cys-69, Cys-75, Cys-78, and Cys-110 each contribute to the [2Fe-2S] cluster site. One can recognise an FAD-binding FR-type domain in the interval 129–269 (VKKWECEVIS…SGPFGEFFAK (141 aa)).

This sequence belongs to the NqrF family. In terms of assembly, composed of six subunits; NqrA, NqrB, NqrC, NqrD, NqrE and NqrF. [2Fe-2S] cluster serves as cofactor. The cofactor is FAD.

It is found in the cell inner membrane. It carries out the reaction a ubiquinone + n Na(+)(in) + NADH + H(+) = a ubiquinol + n Na(+)(out) + NAD(+). In terms of biological role, NQR complex catalyzes the reduction of ubiquinone-1 to ubiquinol by two successive reactions, coupled with the transport of Na(+) ions from the cytoplasm to the periplasm. The first step is catalyzed by NqrF, which accepts electrons from NADH and reduces ubiquinone-1 to ubisemiquinone by a one-electron transfer pathway. This chain is Na(+)-translocating NADH-quinone reductase subunit F, found in Klebsiella pneumoniae subsp. pneumoniae (strain ATCC 700721 / MGH 78578).